Consider the following 694-residue polypeptide: Elongation factor G (694 aa).

Residues 9 to 288 (DAIRNIGIMA…VIVKWLPSPL (280 aa)) enclose the tr-type G domain. GTP contacts are provided by residues 18-25 (AHIDAGKT), 82-86 (DTPGH), and 136-139 (NKMD).

Belongs to the TRAFAC class translation factor GTPase superfamily. Classic translation factor GTPase family. EF-G/EF-2 subfamily.

It localises to the cytoplasm. Catalyzes the GTP-dependent ribosomal translocation step during translation elongation. During this step, the ribosome changes from the pre-translocational (PRE) to the post-translocational (POST) state as the newly formed A-site-bound peptidyl-tRNA and P-site-bound deacylated tRNA move to the P and E sites, respectively. Catalyzes the coordinated movement of the two tRNA molecules, the mRNA and conformational changes in the ribosome. This is Elongation factor G (fusA) from Chlamydia muridarum (strain MoPn / Nigg).